Consider the following 254-residue polypeptide: Arginine/ornithine transport ATP-binding protein AotP (254 aa).

Positions 4–249 (LEVQDLHKRY…PQSDRLKQFL (246 aa)) constitute an ABC transporter domain. An ATP-binding site is contributed by 36–43 (GSSGSGKS).

This sequence belongs to the ABC transporter superfamily.

It localises to the cell inner membrane. Functionally, part of the arginine-inducible binding-protein-dependent transport system for arginine and ornithine. Probably responsible for energy coupling to the transport system. The polypeptide is Arginine/ornithine transport ATP-binding protein AotP (aotP) (Pseudomonas aeruginosa (strain ATCC 15692 / DSM 22644 / CIP 104116 / JCM 14847 / LMG 12228 / 1C / PRS 101 / PAO1)).